We begin with the raw amino-acid sequence, 148 residues long: Small ribosomal subunit protein bS6 (148 aa).

Positions 96–148 (HEEGQSAMLTRRDDRRERDGDDRPRRREGGFDRGDRGDRGPRRPRDNEAGEGA) are disordered.

It belongs to the bacterial ribosomal protein bS6 family.

In terms of biological role, binds together with bS18 to 16S ribosomal RNA. This chain is Small ribosomal subunit protein bS6, found in Brucella abortus biovar 1 (strain 9-941).